The sequence spans 90 residues: UPF0237 protein MMP0657 (90 aa).

The ACT domain maps to 5–79 (VITVVGVDKP…SEIGVKINVQ (75 aa)).

Belongs to the UPF0237 family.

The polypeptide is UPF0237 protein MMP0657 (Methanococcus maripaludis (strain DSM 14266 / JCM 13030 / NBRC 101832 / S2 / LL)).